A 260-amino-acid polypeptide reads, in one-letter code: Sodium channel modifier 1 (260 aa).

Residues 4 to 20 (KRDGDDSSQLNVLKKRR) carry the Bipartite nuclear localization signal motif. A Matrin-type zinc finger spans residues 42–74 (YACTVCHHRPVFNTIDMLSVHRTGKKHLGGLQR). The tract at residues 143-260 (RNVYDPHSGP…EEEPPALPPS (118 aa)) is disordered. Positions 166–187 (PGPSQPHTSLHSPPTGPCSSPT) are enriched in polar residues. The span at 202-221 (KGEEKFRKEIADPERERNME) shows a compositional bias: basic and acidic residues. The segment covering 245–254 (VEFDSDEEEP) has biased composition (acidic residues).

Component of the minor spliceosome, which splices U12-type introns.

It localises to the nucleus. The protein localises to the nucleoplasm. The protein resides in the nucleus speckle. Functionally, as a component of the minor spliceosome, involved in the splicing of U12-type introns in pre-mRNAs. The protein is Sodium channel modifier 1 (scnm1) of Xenopus laevis (African clawed frog).